Reading from the N-terminus, the 121-residue chain is Two-component response regulator ORR12 (121 aa).

Residues 5–121 form the Response regulatory domain; the sequence is HVLVVDDTLV…VDLPRILNYI (117 aa). Aspartate 55 is modified (4-aspartylphosphate).

The protein belongs to the ARR family. Type-A subfamily. In terms of processing, two-component system major event consists of a His-to-Asp phosphorelay between a sensor histidine kinase (HK) and a response regulator (RR). In plants, the His-to-Asp phosphorelay involves an additional intermediate named Histidine-containing phosphotransfer protein (HPt). This multistep phosphorelay consists of a His-Asp-His-Asp sequential transfer of a phosphate group between first a His and an Asp of the HK protein, followed by the transfer to a conserved His of the HPt protein and finally the transfer to an Asp in the receiver domain of the RR protein. In terms of tissue distribution, expressed in flowers and panicles.

In terms of biological role, functions as a response regulator involved in His-to-Asp phosphorelay signal transduction system. Phosphorylation of the Asp residue in the receiver domain activates the ability of the protein to promote the transcription of target genes. Type-A response regulators seem to act as negative regulators of the cytokinin signaling. This chain is Two-component response regulator ORR12, found in Oryza sativa subsp. japonica (Rice).